The following is a 426-amino-acid chain: Probable indole-3-pyruvate monooxygenase YUCCA8 (426 aa).

Position 29-34 (29-34) interacts with FAD; it reads GAGPSG. Residue 199–204 coordinates NADP(+); the sequence is GCGNSG.

This sequence belongs to the FMO family. It depends on FAD as a cofactor. Expressed in root tips and in hydathodes. Expressed in root vasculature and quiescent center, but not in the meristematic zone of the root tip.

The catalysed reaction is indole-3-pyruvate + NADPH + O2 + H(+) = (indol-3-yl)acetate + CO2 + NADP(+) + H2O. The protein operates within plant hormone metabolism; auxin biosynthesis. Its function is as follows. Involved in auxin biosynthesis. Belongs to the set of redundant YUCCA genes probably responsible for auxin biosynthesis in roots. This is Probable indole-3-pyruvate monooxygenase YUCCA8 (YUC8) from Arabidopsis thaliana (Mouse-ear cress).